We begin with the raw amino-acid sequence, 517 residues long: GMP synthase [glutamine-hydrolyzing] (517 aa).

Residues 11–202 (KIIVLDFGSQ…AFKVCGAKAN (192 aa)) form the Glutamine amidotransferase type-1 domain. Cys88 serves as the catalytic Nucleophile. Residues His176 and Glu178 contribute to the active site. The GMPS ATP-PPase domain occupies 203 to 392 (WTMDDFIEMQ…LGIPHDLVWR (190 aa)). 230–236 (SGGVDSS) lines the ATP pocket.

As to quaternary structure, homodimer.

It catalyses the reaction XMP + L-glutamine + ATP + H2O = GMP + L-glutamate + AMP + diphosphate + 2 H(+). It participates in purine metabolism; GMP biosynthesis; GMP from XMP (L-Gln route): step 1/1. Catalyzes the synthesis of GMP from XMP. The chain is GMP synthase [glutamine-hydrolyzing] from Lactobacillus johnsonii (strain CNCM I-12250 / La1 / NCC 533).